The chain runs to 364 residues: Endoglucanase A (364 aa).

Glutamate 169 serves as the catalytic Proton donor. Glutamate 293 (nucleophile) is an active-site residue.

This sequence belongs to the glycosyl hydrolase 5 (cellulase A) family.

It localises to the cytoplasm. It catalyses the reaction Endohydrolysis of (1-&gt;4)-beta-D-glucosidic linkages in cellulose, lichenin and cereal beta-D-glucans.. It carries out the reaction Endohydrolysis of (1-&gt;4)-beta-D-xylosidic linkages in xylans.. Functionally, hydrolyzes both carboxymethylcellulose and xylan. Probably has a role in hydrolyzing oligosaccharides derived from cellulose, which are transported across the cell wall. The polypeptide is Endoglucanase A (celA) (Ruminococcus albus).